We begin with the raw amino-acid sequence, 211 residues long: Protein-L-isoaspartate O-methyltransferase (211 aa).

S60 is an active-site residue.

It belongs to the methyltransferase superfamily. L-isoaspartyl/D-aspartyl protein methyltransferase family.

It localises to the cytoplasm. The catalysed reaction is [protein]-L-isoaspartate + S-adenosyl-L-methionine = [protein]-L-isoaspartate alpha-methyl ester + S-adenosyl-L-homocysteine. Its function is as follows. Catalyzes the methyl esterification of L-isoaspartyl residues in peptides and proteins that result from spontaneous decomposition of normal L-aspartyl and L-asparaginyl residues. It plays a role in the repair and/or degradation of damaged proteins. This is Protein-L-isoaspartate O-methyltransferase from Pseudomonas aeruginosa (strain LESB58).